The sequence spans 153 residues: Subtilisin propeptide-like protein (153 aa).

A signal peptide spans 1–27; that stretch reads MKFLFAFNFFSLYIYLYEFLCIHLCGS. Residues 127–153 are dispensable for parasite growth in host erythrocytes; the sequence is QISHLSEFIQYLLNKNVCIEFNQNVML.

The protein resides in the secreted. The protein localises to the parasitophorous vacuole lumen. It is found in the cell membrane. Acts as a specific inhibitor of subtilisin-like protease SUB1. The polypeptide is Subtilisin propeptide-like protein (Plasmodium falciparum (isolate 3D7)).